Here is a 627-residue protein sequence, read N- to C-terminus: Altered inheritance of mitochondria protein 9, mitochondrial (627 aa).

The transit peptide at 1–43 directs the protein to the mitochondrion; the sequence is MIRYTVAGHSRRCVVGASKRVGAIKCITVAATKRFISNKSNEV.

Belongs to the AIM9 family.

Its subcellular location is the mitochondrion. This is Altered inheritance of mitochondria protein 9, mitochondrial (AIM9) from Saccharomyces cerevisiae (strain JAY291) (Baker's yeast).